A 152-amino-acid chain; its full sequence is uncharacterized protein (152 aa).

A signal peptide spans Met-1–Ala-23.

Belongs to the asfivirus EP152R family.

The protein localises to the virion. This is an uncharacterized protein from Ornithodoros (relapsing fever ticks).